The sequence spans 127 residues: Small ribosomal subunit protein uS13 (127 aa).

The segment at 92–127 is disordered; sequence HRMGLPVRGQRTRTNARTRRGVRRTVAGKKKASAKK. A compositionally biased stretch (basic residues) spans 101-127; that stretch reads QRTRTNARTRRGVRRTVAGKKKASAKK.

The protein belongs to the universal ribosomal protein uS13 family. As to quaternary structure, part of the 30S ribosomal subunit. Forms a loose heterodimer with protein S19. Forms two bridges to the 50S subunit in the 70S ribosome.

Functionally, located at the top of the head of the 30S subunit, it contacts several helices of the 16S rRNA. In the 70S ribosome it contacts the 23S rRNA (bridge B1a) and protein L5 of the 50S subunit (bridge B1b), connecting the 2 subunits; these bridges are implicated in subunit movement. Contacts the tRNAs in the A and P-sites. This is Small ribosomal subunit protein uS13 from Trichodesmium erythraeum (strain IMS101).